A 373-amino-acid chain; its full sequence is PqqA peptide cyclase (373 aa).

One can recognise a Radical SAM core domain in the interval 7–227 (ILNPVGLLAE…EVYAGVIVID (221 aa)). Residues Cys-21, Cys-25, and Cys-28 each coordinate [4Fe-4S] cluster.

This sequence belongs to the radical SAM superfamily. PqqE family. Interacts with PqqD. The interaction is necessary for activity of PqqE. [4Fe-4S] cluster serves as cofactor.

It catalyses the reaction [PQQ precursor protein] + S-adenosyl-L-methionine = E-Y cross-linked-[PQQ precursor protein] + 5'-deoxyadenosine + L-methionine + H(+). The protein operates within cofactor biosynthesis; pyrroloquinoline quinone biosynthesis. Functionally, catalyzes the cross-linking of a glutamate residue and a tyrosine residue in the PqqA protein as part of the biosynthesis of pyrroloquinoline quinone (PQQ). This is PqqA peptide cyclase from Methylocella silvestris (strain DSM 15510 / CIP 108128 / LMG 27833 / NCIMB 13906 / BL2).